The sequence spans 426 residues: Trigger factor (426 aa).

Residues 160–240 (GDTVIGDVTK…IKEVKHLELP (81 aa)) form the PPIase FKBP-type domain.

The protein belongs to the FKBP-type PPIase family. Tig subfamily.

It localises to the cytoplasm. The catalysed reaction is [protein]-peptidylproline (omega=180) = [protein]-peptidylproline (omega=0). Involved in protein export. Acts as a chaperone by maintaining the newly synthesized protein in an open conformation. Functions as a peptidyl-prolyl cis-trans isomerase. This is Trigger factor from Chlorobaculum tepidum (strain ATCC 49652 / DSM 12025 / NBRC 103806 / TLS) (Chlorobium tepidum).